The chain runs to 217 residues: Large ribosomal subunit protein uL4 (217 aa).

The protein belongs to the universal ribosomal protein uL4 family. In terms of assembly, part of the 50S ribosomal subunit.

In terms of biological role, one of the primary rRNA binding proteins, this protein initially binds near the 5'-end of the 23S rRNA. It is important during the early stages of 50S assembly. It makes multiple contacts with different domains of the 23S rRNA in the assembled 50S subunit and ribosome. Its function is as follows. Forms part of the polypeptide exit tunnel. This Koribacter versatilis (strain Ellin345) protein is Large ribosomal subunit protein uL4.